The sequence spans 292 residues: Probable ABC transporter phosphonate/phosphite binding protein PhnD2 (292 aa).

Positions 1–20 are cleaved as a signal peptide; sequence MKLKSLLSVFTISIVALTSA. Residue Cys-21 is the site of N-palmitoyl cysteine attachment. Cys-21 is lipidated: S-diacylglycerol cysteine.

This sequence belongs to the phosphate/phosphite/phosphonate binding protein family. As to quaternary structure, the complex may be composed of two ATP-binding proteins (PhnC2), two transmembrane proteins (PhnE2) and a solute-binding protein (PhnD2).

It localises to the cell membrane. Probably part of the ABC transporter complex PhnC2D2E2. Binds strongly to methylphosphonate (MPn), ethylphosphonate (EPn) and inorganic phosphite. This chain is Probable ABC transporter phosphonate/phosphite binding protein PhnD2, found in Prochlorococcus marinus (strain MIT 9301).